The sequence spans 382 residues: D-galactonate dehydratase (382 aa).

Residue Asp183 coordinates Mg(2+). Residue His185 is the Proton donor of the active site. 2 residues coordinate Mg(2+): Glu209 and Glu235. The active-site Proton acceptor is the His285. A disordered region spans residues 361–382; the sequence is NENPPDWRNPVWRHSDGSIAEW.

The protein belongs to the mandelate racemase/muconate lactonizing enzyme family. GalD subfamily. Mg(2+) is required as a cofactor.

It carries out the reaction D-galactonate = 2-dehydro-3-deoxy-D-galactonate + H2O. It participates in carbohydrate acid metabolism; D-galactonate degradation; D-glyceraldehyde 3-phosphate and pyruvate from D-galactonate: step 1/3. In terms of biological role, catalyzes the dehydration of D-galactonate to 2-keto-3-deoxy-D-galactonate. The chain is D-galactonate dehydratase from Xanthomonas oryzae pv. oryzae (strain MAFF 311018).